The chain runs to 92 residues: Signal recognition particle 19 kDa protein (92 aa).

Belongs to the SRP19 family. As to quaternary structure, part of the signal recognition particle protein translocation system, which is composed of SRP and FtsY. Archaeal SRP consists of a 7S RNA molecule of 300 nucleotides and two protein subunits: SRP54 and SRP19.

It is found in the cytoplasm. Involved in targeting and insertion of nascent membrane proteins into the cytoplasmic membrane. Binds directly to 7S RNA and mediates binding of the 54 kDa subunit of the SRP. In Methanosphaera stadtmanae (strain ATCC 43021 / DSM 3091 / JCM 11832 / MCB-3), this protein is Signal recognition particle 19 kDa protein.